Reading from the N-terminus, the 152-residue chain is MFRGATLVNLDSKGRLSVPTRYREQLLENAAGQMVCTIDIHHPCLLLYPLPEWEIIEQKLSRLSSMNPVERRVQRLLLGHASECQMDGAGRLLIAPVLRQHAGLTKEVMLVGQFNKFELWDETTWHQQVKEDIDAEQLATGDLSERLQDLSL.

2 consecutive SpoVT-AbrB domains span residues 5-52 (ATLV…PLPE) and 81-124 (ASEC…DETT).

It belongs to the MraZ family. In terms of assembly, forms oligomers.

It localises to the cytoplasm. Its subcellular location is the nucleoid. In terms of biological role, negatively regulates its own expression and that of the subsequent genes in the proximal part of the division and cell wall (dcw) gene cluster. Acts by binding directly to DNA. May also regulate the expression of genes outside the dcw cluster. This Escherichia coli O45:K1 (strain S88 / ExPEC) protein is Transcriptional regulator MraZ.